We begin with the raw amino-acid sequence, 366 residues long: Glucose 1-dehydrogenase (366 aa).

Zn(2+) is bound at residue C39. Residue T41 participates in substrate binding. Zn(2+) is bound by residues H66 and E67. N89 provides a ligand contact to substrate. Positions 93, 96, 99, and 107 each coordinate Zn(2+). Residues E114, Q150, and D154 each coordinate substrate. Q150 provides a ligand contact to Zn(2+). Residues 189-192 (TGPI), 211-213 (NRR), 277-279 (FGF), 305-307 (LVN), and K354 each bind NADP(+). N307 contributes to the substrate binding site.

This sequence belongs to the zinc-containing alcohol dehydrogenase family. Glucose 1-dehydrogenase subfamily. Homotetramer. Zn(2+) serves as cofactor.

It catalyses the reaction D-glucose + NAD(+) = D-glucono-1,5-lactone + NADH + H(+). It carries out the reaction D-glucose + NADP(+) = D-glucono-1,5-lactone + NADPH + H(+). The catalysed reaction is D-galactose + NAD(+) = D-galactono-1,4-lactone + NADH + H(+). The enzyme catalyses D-galactose + NADP(+) = D-galactono-1,5-lactone + NADPH + H(+). It catalyses the reaction an aldopyranose + NAD(+) = aldono-1,5-lactone + NADH + H(+). It carries out the reaction an aldopyranose + NADP(+) = aldono-1,5-lactone + NADPH + H(+). Its activity is regulated as follows. Inhibited by EDTA in vitro. Catalyzes the NAD(P)(+)-dependent oxidation of D-glucose to D-gluconate via gluconolactone. Displays broad substrate specificity since it is able to catalyze the oxidation of a number of alternative aldose sugars, such as D-galactose, D-xylose and L-arabinose, to the corresponding glyconate. Can utilize both NAD(+) and NADP(+) as electron acceptor. Physiologically, seems to be involved in the degradation of both glucose and galactose through a non-phosphorylative variant of the Entner-Doudoroff pathway. This is Glucose 1-dehydrogenase from Saccharolobus solfataricus (Sulfolobus solfataricus).